Consider the following 318-residue polypeptide: Homoserine kinase (318 aa).

97–107 is an ATP binding site; it reads PIGSGLGSSAC.

This sequence belongs to the GHMP kinase family. Homoserine kinase subfamily.

Its subcellular location is the cytoplasm. It carries out the reaction L-homoserine + ATP = O-phospho-L-homoserine + ADP + H(+). The protein operates within amino-acid biosynthesis; L-threonine biosynthesis; L-threonine from L-aspartate: step 4/5. Functionally, catalyzes the ATP-dependent phosphorylation of L-homoserine to L-homoserine phosphate. The protein is Homoserine kinase of Vibrio atlanticus (strain LGP32) (Vibrio splendidus (strain Mel32)).